A 236-amino-acid polypeptide reads, in one-letter code: F-box and leucine-rich protein 22 (236 aa).

One can recognise an F-box domain in the interval 1-46 (MHITQLNRECLLCLFSFLDKDSRRSLSRTCSQLRDVFEDPTLWPLL). LRR repeat units lie at residues 15 to 40 (FSFL…FEDP), 43 to 72 (WPLL…SICW), 98 to 123 (HESL…TLSG), 124 to 149 (CGHV…RLEN), 150 to 175 (CARV…HVDF), and 176 to 201 (CRNV…AERS).

In terms of assembly, directly interacts with SKP1 and CUL1. Enriched in cardiac muscle (at protein level).

The protein resides in the cytoplasm. It localises to the myofibril. The protein localises to the sarcomere. Its subcellular location is the z line. It participates in protein modification; protein ubiquitination. Functionally, substrate-recognition component of the SCF (SKP1-CUL1-F-box protein)-type E3 ubiquitin ligase complex. Promotes ubiquitination of sarcomeric proteins alpha-actinin-2 (ACTN2) and filamin-C (FLNC). The protein is F-box and leucine-rich protein 22 (Fbxl22) of Mus musculus (Mouse).